A 118-amino-acid polypeptide reads, in one-letter code: UPF0295 protein BC_0520 (118 aa).

Helical transmembrane passes span 12–32 and 43–63; these read IRTF…LGVF and FMMV…WIGM.

The protein belongs to the UPF0295 family.

Its subcellular location is the cell membrane. The polypeptide is UPF0295 protein BC_0520 (Bacillus cereus (strain ATCC 14579 / DSM 31 / CCUG 7414 / JCM 2152 / NBRC 15305 / NCIMB 9373 / NCTC 2599 / NRRL B-3711)).